Here is a 353-residue protein sequence, read N- to C-terminus: DNA-repair protein XRCC1 (353 aa).

The segment covering 1–12 (MSQKRNLPSWMS) has biased composition (polar residues). The segment at 1–57 (MSQKRNLPSWMSSRDPEITPSKSHCKKPKDEGPTEEHNSRNAPSNKSEHAEPSSNTT) is disordered. The span at 28 to 39 (PKDEGPTEEHNS) shows a compositional bias: basic and acidic residues. Positions 58–146 (EFSKLMEGVV…KLVDIEQYLM (89 aa)) constitute a BRCT 1 domain. The segment at 150 to 194 (KPWRKSSSPQDANREKREHLSKKPEKQVEKKTETRGTPSTSSKNR) is disordered. Over residues 161–183 (ANREKREHLSKKPEKQVEKKTET) the composition is skewed to basic and acidic residues. Positions 184-194 (RGTPSTSSKNR) are enriched in polar residues. A coiled-coil region spans residues 240–260 (AAEGVLTCLQDAIDSLEQKQD). The 82-residue stretch at 266–347 (ELWSFVPRVV…EEEIELAYRN (82 aa)) folds into the BRCT 2 domain.

Homodimer. Interacts with polynucleotide kinase (PNK), DNA polymerase-beta (POLB) and DNA ligase III (LIG3). Interacts with ZDP and ROS1. Binds to various forms of double-stranded DNA (e.g. methylated, unmethylated, with single-nucleotide gap flanked by 3'-phosphate or 5'-phosphate ends).

It localises to the nucleus. In terms of biological role, corrects defective DNA strand-break repair and sister chromatid exchange following treatment with ionizing radiation and alkylating agents. Involved in DNA demethylation pathway by stimulating cytosine methylation (5-meC) excision, gap tailoring, and DNA ligation. The polypeptide is DNA-repair protein XRCC1 (Arabidopsis thaliana (Mouse-ear cress)).